The primary structure comprises 786 residues: MPQPLKQSLDQSKWLREAEKQLRVLENLVDSNLEEEKLKPQLSMGEDVQSPGKGEPLHPNVRAPLSHVVRAVTTDLPRLGNKLPARHHLGKLSGLYQMKGCTFNPEWKVPDISDTHFDLEVINECPSRNWKYLTPAKFWPKSISYFPVQAGVKPKYPDNVMQHESIVGKYLTRLYEAGILYKRISKHLVTFKGQPYNWEQQHLVNQHQIPDGATSSKINGRQENRRRRTPIKSTCRQNDTKRDSDMVGQVSNNRSRIRPCANNGGDKHPPATGSLACWGRKASRVIKSGSSRDSSASVDSRRRSKGPRGFSTLPRRETTGNDHHSSDISNSVEATTRRRSTPGESITLGDSSIIPDGTSCASDKDSSPKEENVWYLRGNTSWPNRITGKLFLVDKNSRNTTEARLVVDFSQFSKGKNAMRFPRYWSPNLSTLRRILPVGMPRISLDLSQAFYHLPLNPASSSRLAVSDGQWVYYFRKAPMGVGLSPFLLHLFTTALGSEISRRFNVWTFTYMDDFLLCHPNARHLNSISHAVCSFLQELGIRINFDKTTPSPVTEIRFLGYQIDEHFMKIEESRWKELRTVIKKIKVGEWYDWKCIQRFVGHLNFVLPFTKGNIEMLKPMYAAITNQVNFSFSSAYRTLLYKLTMGVCKLRINPKSSVPLPRVATDATPTHGAISHITGGSAVFAFSKVRDIHIQELLMTCLARIMIKPRCLLSDSTFVCHKRYQTLPWHFAVLAKQLLKPIQLYFVPSKYNPADGPSRHRPPDWTAFPYTPLSKAIYIPHRLCGT.

Residues 1–200 are terminal protein domain (TP); the sequence is MPQPLKQSLD…FKGQPYNWEQ (200 aa). 2 disordered regions span residues 36-60 and 207-368; these read EKLKPQLSMGEDVQSPGKGEPLHPN and HQIP…DSSP. Residues 201–364 form a spacer region; it reads QHLVNQHQIP…PDGTSCASDK (164 aa). The segment covering 207 to 221 has biased composition (polar residues); that stretch reads HQIPDGATSSKINGR. A compositionally biased stretch (low complexity) spans 288-298; that stretch reads SGSSRDSSASV. Basic and acidic residues predominate over residues 314–326; the sequence is PRRETTGNDHHSS. The polymerase/reverse transcriptase domain (RT) stretch occupies residues 365–653; it reads DSSPKEENVW…TMGVCKLRIN (289 aa). A Reverse transcriptase domain is found at 374-563; sequence WYLRGNTSWP…TEIRFLGYQI (190 aa). Positions 446, 513, and 514 each coordinate Mg(2+). A rnaseH domain (RH) region spans residues 654–786; the sequence is PKSSVPLPRV…IYIPHRLCGT (133 aa).

The protein belongs to the hepadnaviridae P protein family.

The enzyme catalyses DNA(n) + a 2'-deoxyribonucleoside 5'-triphosphate = DNA(n+1) + diphosphate. It catalyses the reaction Endonucleolytic cleavage to 5'-phosphomonoester.. Activated by host HSP70 and HSP40 in vitro to be able to bind the epsilon loop of the pgRNA. Because deletion of the RNase H region renders the protein partly chaperone-independent, the chaperones may be needed indirectly to relieve occlusion of the RNA-binding site by this domain. Its function is as follows. Multifunctional enzyme that converts the viral RNA genome into dsDNA in viral cytoplasmic capsids. This enzyme displays a DNA polymerase activity that can copy either DNA or RNA templates, and a ribonuclease H (RNase H) activity that cleaves the RNA strand of RNA-DNA heteroduplexes in a partially processive 3'- to 5'-endonucleasic mode. Neo-synthesized pregenomic RNA (pgRNA) are encapsidated together with the P protein, and reverse-transcribed inside the nucleocapsid. Initiation of reverse-transcription occurs first by binding the epsilon loop on the pgRNA genome, and is initiated by protein priming, thereby the 5'-end of (-)DNA is covalently linked to P protein. Partial (+)DNA is synthesized from the (-)DNA template and generates the relaxed circular DNA (RC-DNA) genome. After budding and infection, the RC-DNA migrates in the nucleus, and is converted into a plasmid-like covalently closed circular DNA (cccDNA). The activity of P protein does not seem to be necessary for cccDNA generation, and is presumably released from (+)DNA by host nuclear DNA repair machinery. This chain is Protein P (P), found in Anas (ducks).